Here is a 406-residue protein sequence, read N- to C-terminus: Cysteine desulfurase (406 aa).

Lys-226 bears the N6-(pyridoxal phosphate)lysine mark. The Cysteine persulfide intermediate role is filled by Cys-364.

This sequence belongs to the class-V pyridoxal-phosphate-dependent aminotransferase family. Csd subfamily. As to quaternary structure, homodimer. Interacts with SufE and the SufBCD complex composed of SufB, SufC and SufD. The interaction with SufE is required to mediate the direct transfer of the sulfur atom from the S-sulfanylcysteine. The cofactor is pyridoxal 5'-phosphate.

The protein resides in the cytoplasm. The enzyme catalyses (sulfur carrier)-H + L-cysteine = (sulfur carrier)-SH + L-alanine. It carries out the reaction L-selenocysteine + AH2 = hydrogenselenide + L-alanine + A + H(+). It functions in the pathway cofactor biosynthesis; iron-sulfur cluster biosynthesis. Functionally, cysteine desulfurases mobilize the sulfur from L-cysteine to yield L-alanine, an essential step in sulfur metabolism for biosynthesis of a variety of sulfur-containing biomolecules. Component of the suf operon, which is activated and required under specific conditions such as oxidative stress and iron limitation. Acts as a potent selenocysteine lyase in vitro, that mobilizes selenium from L-selenocysteine. Selenocysteine lyase activity is however unsure in vivo. The polypeptide is Cysteine desulfurase (Salmonella agona (strain SL483)).